The sequence spans 1135 residues: DNA-directed RNA polymerase subunit beta' (1135 aa).

Zn(2+)-binding residues include cysteine 60, cysteine 62, cysteine 75, and cysteine 78. Residues aspartate 450, aspartate 452, and aspartate 454 each coordinate Mg(2+). Cysteine 795, cysteine 869, cysteine 876, and cysteine 879 together coordinate Zn(2+).

The protein belongs to the RNA polymerase beta' chain family. As to quaternary structure, the RNAP catalytic core consists of 2 alpha, 1 beta, 1 beta' and 1 omega subunit. When a sigma factor is associated with the core the holoenzyme is formed, which can initiate transcription. It depends on Mg(2+) as a cofactor. Zn(2+) is required as a cofactor.

It carries out the reaction RNA(n) + a ribonucleoside 5'-triphosphate = RNA(n+1) + diphosphate. In terms of biological role, DNA-dependent RNA polymerase catalyzes the transcription of DNA into RNA using the four ribonucleoside triphosphates as substrates. The polypeptide is DNA-directed RNA polymerase subunit beta' (Clostridium tetani (strain Massachusetts / E88)).